Here is a 1451-residue protein sequence, read N- to C-terminus: DNA polymerase III PolC-type (1451 aa).

The Exonuclease domain occupies 416-575 (FVIFDIETTG…YDTEALKKVF (160 aa)).

It belongs to the DNA polymerase type-C family. PolC subfamily.

The protein localises to the cytoplasm. It catalyses the reaction DNA(n) + a 2'-deoxyribonucleoside 5'-triphosphate = DNA(n+1) + diphosphate. In terms of biological role, required for replicative DNA synthesis. This DNA polymerase also exhibits 3' to 5' exonuclease activity. The polypeptide is DNA polymerase III PolC-type (Mycoplasma genitalium (strain ATCC 33530 / DSM 19775 / NCTC 10195 / G37) (Mycoplasmoides genitalium)).